A 224-amino-acid polypeptide reads, in one-letter code: 7-cyano-7-deazaguanine synthase (224 aa).

8–18 is a binding site for ATP; that stretch reads VSGGADSATVL. Residues cysteine 189, cysteine 199, cysteine 202, and cysteine 205 each coordinate Zn(2+).

The protein belongs to the QueC family. It depends on Zn(2+) as a cofactor.

It carries out the reaction 7-carboxy-7-deazaguanine + NH4(+) + ATP = 7-cyano-7-deazaguanine + ADP + phosphate + H2O + H(+). The protein operates within purine metabolism; 7-cyano-7-deazaguanine biosynthesis. In terms of biological role, catalyzes the ATP-dependent conversion of 7-carboxy-7-deazaguanine (CDG) to 7-cyano-7-deazaguanine (preQ(0)). The polypeptide is 7-cyano-7-deazaguanine synthase (Rickettsia felis (strain ATCC VR-1525 / URRWXCal2) (Rickettsia azadi)).